The following is a 688-amino-acid chain: PHD finger protein 21A (688 aa).

Lys-65 is covalently cross-linked (Glycyl lysine isopeptide (Lys-Gly) (interchain with G-Cter in SUMO2)). Disordered stretches follow at residues 78 to 127 (SQSE…LTAS) and 327 to 373 (PQTV…ENPQ). Residues 85–127 (QTAQQQPLQPLQQQQPQQPQQQQQQQQQHAQQSAAAPPSLTAS) show a composition bias toward low complexity. Basic and acidic residues predominate over residues 336-354 (SLEKQTVKSHPEAEEKQAE). The segment at residues 434–446 (TRKRGRPPKYNAV) is a DNA-binding region (a.T hook). The tract at residues 449–471 (FGALTPTSPPSSHPDSPENEKTE) is disordered. Residue Thr-453 is modified to Phosphothreonine. Residue Ser-456 is modified to Phosphoserine. The PHD-type zinc-finger motif lies at 497 to 544 (EDFCSVCRKSGQLLMCDTCSRVYHLDCLEPPLKTIPKGMWICPRCQDQ). The stretch at 571–609 (KEEEKQKLLKWSSDLKQEREQLEQKVKELSSSISKCMEM) forms a coiled coil. The disordered stretch occupies residues 650-688 (GALSNGPDCTPPANAASTPAPSPSSQSCTANCNQGEETK). A compositionally biased stretch (low complexity) spans 660–679 (PPANAASTPAPSPSSQSCTA).

As to quaternary structure, component of a BHC histone deacetylase complex that contains HDAC1, HDAC2, HMG20B/BRAF35, KDM1A, RCOR1/CoREST and PHF21A/BHC80. The BHC complex may also contain ZMYM2, ZNF217, ZMYM3, GSE1 and GTF2I. In the complex, it interacts directly with HDAC1, HDAC2, HMG20B/BRAF35, KDM1A and RCOR1/CoREST. Expressed in the brain and testis. Weakly or not expressed in other tissues tested. Localized throughout the central nervous system (CNS) in brain, including the cerebellum, hippocampus, and cortex. Notably present in neuronal cells of granular cell layer and dentate gyrus in cerebellum and hippocampus, respectively. In the seminiferous tubules, the signals it is present strongly in spermatocytes, and weakly in spermatogonia and round spermatids. In some cases, it is also observed solely in spermatocytes (at protein level).

Its subcellular location is the nucleus. Functionally, component of the BHC complex, a corepressor complex that represses transcription of neuron-specific genes in non-neuronal cells. The BHC complex is recruited at RE1/NRSE sites by REST and acts by deacetylating and demethylating specific sites on histones, thereby acting as a chromatin modifier. In the BHC complex, it may act as a scaffold. Inhibits KDM1A-mediated demethylation of 'Lys-4' of histone H3 in vitro, suggesting a role in demethylation regulation. This chain is PHD finger protein 21A, found in Mus musculus (Mouse).